Consider the following 378-residue polypeptide: Actin-related protein 2/3 complex subunit 1A (378 aa).

WD repeat units lie at residues 8–47, 53–92, 97–138, 143–182, 203–242, 257–295, and 331–375; these read RFAESITCHAWSPDLSMVALCPNNTEVHIYKSLSQDHWER, KHDQIVSGIDWSSKSNKIVTVSHDRNSYVWSLEGAEWVPT, RLNR…WVSK, RHESSVTSVAWHPNNVLLATTSTDGKCRVFSTFIKGVDTK, LSYSWAFGVKWSPSGNTLAYVGHSSMIYFVDDVGPSPLAQ, ISEKMVIGVGYDSNPMVFASDDTGIWSFIRYIGEKKAAS, and VHDN…QELG.

The protein belongs to the WD repeat ARPC1 family. As to quaternary structure, component of the Arp2/3 complex composed of ARP2, ARP3, ARPC1/p41-ARC, ARPC2/p34-ARC, ARPC3/p21-ARC, ARPC4/p20-ARC and ARPC5/p16-ARC. As to expression, expressed at low levels in all tissues with a relatively highest expression in inflorescences.

The protein resides in the cytoplasm. It localises to the cytoskeleton. Its function is as follows. Functions as a component of the Arp2/3 complex which is involved in regulation of actin polymerization and together with an activating nucleation-promoting factor (NPF) mediates the formation of branched actin networks. Arp2/3 complex plays a critical role in the control of cell morphogenesis via the modulation of cell polarity development. This is Actin-related protein 2/3 complex subunit 1A (ARPC1A) from Arabidopsis thaliana (Mouse-ear cress).